We begin with the raw amino-acid sequence, 207 residues long: Uracil phosphoribosyltransferase (207 aa).

5-phospho-alpha-D-ribose 1-diphosphate contacts are provided by residues R77, R102, and 129 to 137 (DPMLATGGS). Residues I192 and 197 to 199 (GDA) each bind uracil. D198 lines the 5-phospho-alpha-D-ribose 1-diphosphate pocket.

It belongs to the UPRTase family. It depends on Mg(2+) as a cofactor.

The catalysed reaction is UMP + diphosphate = 5-phospho-alpha-D-ribose 1-diphosphate + uracil. It participates in pyrimidine metabolism; UMP biosynthesis via salvage pathway; UMP from uracil: step 1/1. Its activity is regulated as follows. Allosterically activated by GTP. In terms of biological role, catalyzes the conversion of uracil and 5-phospho-alpha-D-ribose 1-diphosphate (PRPP) to UMP and diphosphate. This Dictyoglomus thermophilum (strain ATCC 35947 / DSM 3960 / H-6-12) protein is Uracil phosphoribosyltransferase.